The chain runs to 455 residues: Protein chibby homolog 2 (455 aa).

Phosphoserine occurs at positions 41, 86, 89, 97, 124, 144, 148, and 150. Residues K160–V197 are a coiled coil. A phosphoserine mark is found at S211 and S225. A coiled-coil region spans residues G240–Y266. The interval W267 to S318 is disordered. The segment covering P270–H291 has biased composition (basic and acidic residues). A phosphoserine mark is found at S276 and S332. Positions S350–I421 form a coiled coil.

It belongs to the chibby family. SPERT subfamily. In terms of assembly, homodimer. Binds to NEK1.

The protein is Protein chibby homolog 2 (CBY2) of Bos taurus (Bovine).